We begin with the raw amino-acid sequence, 343 residues long: MEPLVQQTERFSELLAVSCGSLVSTWDAEKVRRALQWARYLLHVYRRFAGRGRVREALERRLPARGGPLGLRSFAALESGDARLALRLLRNRALAPAAARALPSLLFPGPAADHRDDVPQSRLVLLARRGSALRLLCRLGGDAPRSALLRTHAELLDARLHELGGADSAAARKLLDTLWTRGPREHVLDVTAEALLLREEDPEPAQATDPAGADETQKLLRWLLESPEVLAAFCRHLPAKRLASVAGCHHALSRAYLDLLTTWATRLHYDLQKGAWVPTQMEDMPWEELCLRLQSLCHAQPFLQEEVLVTLRSRKALDGDFEVPGMSIWTDLLVVLECGIVLE.

Belongs to the multisubunit FA complex composed of FANCA, FANCB, FANCC, FANCE, FANCF, FANCG, FANCL/PHF9 and FANCM. In complex with FANCA, FANCG and FANCL, but not with FANCC, nor FANCE, interacts with HES1; this interaction may be essential for the stability and nuclear localization of FA core complex proteins.

The protein localises to the nucleus. Its function is as follows. DNA repair protein that may operate in a postreplication repair or a cell cycle checkpoint function. May be implicated in interstrand DNA cross-link repair and in the maintenance of normal chromosome stability. The sequence is that of Fanconi anemia group F protein from Mus musculus (Mouse).